A 216-amino-acid polypeptide reads, in one-letter code: Ras-related protein RABA1c (216 aa).

20–27 (GDSGVGKS) is a GTP binding site. The Effector region signature appears at 42 to 50 (SKSTIGVEF). Residues 68-72 (DTAGQ), 126-129 (NKSD), and 156-157 (SA) each bind GTP. 2 S-geranylgeranyl cysteine lipidation sites follow: C213 and C214.

The protein belongs to the small GTPase superfamily. Rab family.

The protein localises to the cell membrane. Its function is as follows. Intracellular vesicle trafficking and protein transport. The chain is Ras-related protein RABA1c (RABA1C) from Arabidopsis thaliana (Mouse-ear cress).